The chain runs to 206 residues: Inner membrane-spanning protein YciB (206 aa).

The next 5 helical transmembrane spans lie at 22–42 (IYTATGALIVASAVQIILTYF), 50–70 (MQVITFLMVAVFGGMTIFLHD), 76–96 (WKVTIVYALFAIGLTVSHIMG), 118–138 (INWAWTLFFTLCAILNVYVAF), and 148–168 (FKVFGLLIATFAFTLLTGVYI). Basic and acidic residues predominate over residues 178 to 189 (LPKDKHQQRDQE). The tract at residues 178–206 (LPKDKHQQRDQETQNDTQQELSGKNTEEK) is disordered. Residues 191–206 (QNDTQQELSGKNTEEK) show a composition bias toward polar residues.

Belongs to the YciB family.

Its subcellular location is the cell inner membrane. Functionally, plays a role in cell envelope biogenesis, maintenance of cell envelope integrity and membrane homeostasis. The sequence is that of Inner membrane-spanning protein YciB from Vibrio atlanticus (strain LGP32) (Vibrio splendidus (strain Mel32)).